The sequence spans 196 residues: Phosphoheptose isomerase (196 aa).

In terms of domain architecture, SIS spans 34–192; it reads MVQCLLGGNK…CEIIDTTLFP (159 aa). 49–51 is a substrate binding site; the sequence is NGG. 2 residues coordinate Zn(2+): His-58 and Gln-62. Substrate-binding positions include Gln-62, 91 to 92, 117 to 119, Ser-122, and Gln-172; these read ND and STS. Zn(2+) contacts are provided by Gln-172 and His-180.

This sequence belongs to the SIS family. GmhA subfamily. Homotetramer. It depends on Zn(2+) as a cofactor.

The protein resides in the cytoplasm. It catalyses the reaction 2 D-sedoheptulose 7-phosphate = D-glycero-alpha-D-manno-heptose 7-phosphate + D-glycero-beta-D-manno-heptose 7-phosphate. The protein operates within carbohydrate biosynthesis; D-glycero-D-manno-heptose 7-phosphate biosynthesis; D-glycero-alpha-D-manno-heptose 7-phosphate and D-glycero-beta-D-manno-heptose 7-phosphate from sedoheptulose 7-phosphate: step 1/1. Its function is as follows. Catalyzes the isomerization of sedoheptulose 7-phosphate in D-glycero-D-manno-heptose 7-phosphate. This chain is Phosphoheptose isomerase, found in Colwellia psychrerythraea (strain 34H / ATCC BAA-681) (Vibrio psychroerythus).